The primary structure comprises 441 residues: Rho-associated protein kinase 1 (441 aa).

Positions 1-99 (NSKSQMDKDY…RLEQEVNEHK (99 aa)) form a coiled coil. Residues 114–353 (EAKSVAMCEM…TLSRLEETNS (240 aa)) form an SHROOM3 binding region. In terms of domain architecture, RhoBD spans 356 to 422 (TKDIELLRKE…LAEIMNRKDF (67 aa)). Residues 418–441 (NRKDFKIDRKKANTQDLRKKKKKK) are a coiled coil.

This sequence belongs to the protein kinase superfamily. AGC Ser/Thr protein kinase family. In terms of assembly, homodimer. Interacts with RHOA (activated by GTP), RHOB, RHOC, GEM, MYLC2B, RHOE, PPP1R12A, LIMK1, LIMK2, TSG101, CHORDC1, DAPK3, PFN1, PTEN and JIP3. Interacts with FHOD1 in a Src-dependent manner. Interacts with ITGB1BP1 (via N-terminus and PTB domain). Interacts with SHROOM3. Mg(2+) serves as cofactor.

It localises to the cytoplasm. The protein localises to the golgi apparatus membrane. The protein resides in the cytoskeleton. Its subcellular location is the microtubule organizing center. It is found in the centrosome. It localises to the centriole. The protein localises to the cell projection. The protein resides in the bleb. Its subcellular location is the cell membrane. It is found in the lamellipodium. It localises to the ruffle. It carries out the reaction L-seryl-[protein] + ATP = O-phospho-L-seryl-[protein] + ADP + H(+). The catalysed reaction is L-threonyl-[protein] + ATP = O-phospho-L-threonyl-[protein] + ADP + H(+). Activated by RHOA binding. Inhibited by Y-27632. Protein kinase which is a key regulator of the actin cytoskeleton and cell polarity. Involved in regulation of smooth muscle contraction, actin cytoskeleton organization, stress fiber and focal adhesion formation, neurite retraction, cell adhesion and motility via phosphorylation of DAPK3, GFAP, LIMK1, LIMK2, MYL9/MLC2, TPPP, PFN1 and PPP1R12A. Phosphorylates FHOD1 and acts synergistically with it to promote SRC-dependent non-apoptotic plasma membrane blebbing. Phosphorylates JIP3 and regulates the recruitment of JNK to JIP3 upon UVB-induced stress. Acts as a suppressor of inflammatory cell migration by regulating PTEN phosphorylation and stability. Acts as a negative regulator of VEGF-induced angiogenic endothelial cell activation. Required for centrosome positioning and centrosome-dependent exit from mitosis. Plays a role in terminal erythroid differentiation. Inhibits podocyte motility via regulation of actin cytoskeletal dynamics and phosphorylation of CFL1. Promotes keratinocyte terminal differentiation. Involved in osteoblast compaction through the fibronectin fibrillogenesis cell-mediated matrix assembly process, essential for osteoblast mineralization. May regulate closure of the eyelids and ventral body wall by inducing the assembly of actomyosin bundles. This is Rho-associated protein kinase 1 (ROCK1) from Bos taurus (Bovine).